Reading from the N-terminus, the 81-residue chain is MNPIISAASVIAAGLAVGLASIGPGIGQGTAAGQAVEGIARQPEAEDKIRGTLLLSLAFMEALTIYGLVVALALLFANPFV.

Transmembrane regions (helical) follow at residues proline 3–glycine 23 and leucine 57–alanine 77.

It belongs to the ATPase C chain family. F-type ATPases have 2 components, F(1) - the catalytic core - and F(0) - the membrane proton channel. F(1) has five subunits: alpha(3), beta(3), gamma(1), delta(1), epsilon(1). F(0) has four main subunits: a(1), b(1), b'(1) and c(10-14). The alpha and beta chains form an alternating ring which encloses part of the gamma chain. F(1) is attached to F(0) by a central stalk formed by the gamma and epsilon chains, while a peripheral stalk is formed by the delta, b and b' chains.

The protein localises to the plastid. Its subcellular location is the chloroplast thylakoid membrane. Functionally, f(1)F(0) ATP synthase produces ATP from ADP in the presence of a proton or sodium gradient. F-type ATPases consist of two structural domains, F(1) containing the extramembraneous catalytic core and F(0) containing the membrane proton channel, linked together by a central stalk and a peripheral stalk. During catalysis, ATP synthesis in the catalytic domain of F(1) is coupled via a rotary mechanism of the central stalk subunits to proton translocation. In terms of biological role, key component of the F(0) channel; it plays a direct role in translocation across the membrane. A homomeric c-ring of between 10-14 subunits forms the central stalk rotor element with the F(1) delta and epsilon subunits. This chain is ATP synthase subunit c, chloroplastic, found in Cicer arietinum (Chickpea).